Reading from the N-terminus, the 458-residue chain is UDP-N-acetylmuramate--L-alanine ligase (458 aa).

Position 112-118 (112-118 (GMHGKTT)) interacts with ATP.

This sequence belongs to the MurCDEF family.

Its subcellular location is the cytoplasm. It carries out the reaction UDP-N-acetyl-alpha-D-muramate + L-alanine + ATP = UDP-N-acetyl-alpha-D-muramoyl-L-alanine + ADP + phosphate + H(+). Its pathway is cell wall biogenesis; peptidoglycan biosynthesis. Functionally, cell wall formation. This Acidobacterium capsulatum (strain ATCC 51196 / DSM 11244 / BCRC 80197 / JCM 7670 / NBRC 15755 / NCIMB 13165 / 161) protein is UDP-N-acetylmuramate--L-alanine ligase.